The chain runs to 246 residues: MNKEEQRKNSAAQSIRWHFPSIHPEGRKFFVIAVIISAIITYFSWLWMAWPLGVLCFCVAAFFRDPIRTVPEGDGLIVSPADGMVCLIADVPPPPELAGADGLGDAPLTRVSIFMSVFDVHINRAPVPGRIARIAYIPGAFVNADLDKASEKNERQHFMIETKEGINVGLTQIAGLIARRIVPLTKVEDYVERGERIGLIRFGSRLDVYLPAGVTPQVALGQRCLAGETILGQIGSQAKPLTGMRL.

Ser-204 (schiff-base intermediate with substrate; via pyruvic acid) is an active-site residue. Ser-204 carries the post-translational modification Pyruvic acid (Ser); by autocatalysis.

Belongs to the phosphatidylserine decarboxylase family. PSD-A subfamily. As to quaternary structure, heterodimer of a large membrane-associated beta subunit and a small pyruvoyl-containing alpha subunit. Pyruvate is required as a cofactor. Post-translationally, is synthesized initially as an inactive proenzyme. Formation of the active enzyme involves a self-maturation process in which the active site pyruvoyl group is generated from an internal serine residue via an autocatalytic post-translational modification. Two non-identical subunits are generated from the proenzyme in this reaction, and the pyruvate is formed at the N-terminus of the alpha chain, which is derived from the carboxyl end of the proenzyme. The post-translation cleavage follows an unusual pathway, termed non-hydrolytic serinolysis, in which the side chain hydroxyl group of the serine supplies its oxygen atom to form the C-terminus of the beta chain, while the remainder of the serine residue undergoes an oxidative deamination to produce ammonia and the pyruvoyl prosthetic group on the alpha chain.

The protein localises to the cell membrane. It carries out the reaction a 1,2-diacyl-sn-glycero-3-phospho-L-serine + H(+) = a 1,2-diacyl-sn-glycero-3-phosphoethanolamine + CO2. The protein operates within phospholipid metabolism; phosphatidylethanolamine biosynthesis; phosphatidylethanolamine from CDP-diacylglycerol: step 2/2. Catalyzes the formation of phosphatidylethanolamine (PtdEtn) from phosphatidylserine (PtdSer). This chain is Phosphatidylserine decarboxylase proenzyme, found in Zymomonas mobilis subsp. mobilis (strain ATCC 31821 / ZM4 / CP4).